The chain runs to 185 residues: Ribosome-recycling factor (185 aa).

The tract at residues 144-164 (KEGEAGEDEVGRAEKDLDKTT) is disordered.

Belongs to the RRF family.

The protein resides in the cytoplasm. Responsible for the release of ribosomes from messenger RNA at the termination of protein biosynthesis. May increase the efficiency of translation by recycling ribosomes from one round of translation to another. This chain is Ribosome-recycling factor, found in Mycobacterium tuberculosis (strain CDC 1551 / Oshkosh).